A 227-amino-acid polypeptide reads, in one-letter code: Octanoyltransferase (227 aa).

Residues 47-223 (EDTADEIWLL…HLLRLLPPGV (177 aa)) form the BPL/LPL catalytic domain. Residues 87 to 94 (RGGQITYH), 154 to 156 (ALG), and 167 to 169 (GLA) each bind substrate. C185 (acyl-thioester intermediate) is an active-site residue.

This sequence belongs to the LipB family.

The protein localises to the cytoplasm. It carries out the reaction octanoyl-[ACP] + L-lysyl-[protein] = N(6)-octanoyl-L-lysyl-[protein] + holo-[ACP] + H(+). Its pathway is protein modification; protein lipoylation via endogenous pathway; protein N(6)-(lipoyl)lysine from octanoyl-[acyl-carrier-protein]: step 1/2. In terms of biological role, catalyzes the transfer of endogenously produced octanoic acid from octanoyl-acyl-carrier-protein onto the lipoyl domains of lipoate-dependent enzymes. Lipoyl-ACP can also act as a substrate although octanoyl-ACP is likely to be the physiological substrate. The polypeptide is Octanoyltransferase (Azoarcus sp. (strain BH72)).